The sequence spans 862 residues: Taxadiene synthase (862 aa).

Residues 45–66 (RVKMSRGSGGPGPVVMMSSSTG) are disordered. Mg(2+) contacts are provided by Asp613, Asp617, Asn757, Thr761, and Glu765. A DDXXD motif motif is present at residues 613–617 (DDMAD).

The protein belongs to the terpene synthase family. Requires Mg(2+) as cofactor.

The enzyme catalyses (2E,6E,10E)-geranylgeranyl diphosphate = taxa-4(5),11(12)-diene + diphosphate. It functions in the pathway alkaloid biosynthesis; taxol biosynthesis; taxa-4(20),11-dien-5alpha-ol from geranylgeranyl diphosphate: step 1/2. Catalyzes the cyclization of the ubiquitous isoprenoid intermediate geranylgeranyl diphosphate to taxa-4,11-diene, the parent olefin with a taxane skeleton. This is Taxadiene synthase (TDC1) from Taxus chinensis (Chinese yew).